We begin with the raw amino-acid sequence, 189 residues long: Shikimate kinase (189 aa).

22–27 is an ATP binding site; sequence ASGKST. Serine 26 contributes to the Mg(2+) binding site. Substrate is bound by residues aspartate 44, arginine 68, and glycine 90. An ATP-binding site is contributed by arginine 128. A substrate-binding site is contributed by arginine 147.

This sequence belongs to the shikimate kinase family. As to quaternary structure, monomer. Mg(2+) is required as a cofactor.

It is found in the cytoplasm. It catalyses the reaction shikimate + ATP = 3-phosphoshikimate + ADP + H(+). The protein operates within metabolic intermediate biosynthesis; chorismate biosynthesis; chorismate from D-erythrose 4-phosphate and phosphoenolpyruvate: step 5/7. Its function is as follows. Catalyzes the specific phosphorylation of the 3-hydroxyl group of shikimic acid using ATP as a cosubstrate. The protein is Shikimate kinase of Synechococcus sp. (strain JA-3-3Ab) (Cyanobacteria bacterium Yellowstone A-Prime).